The primary structure comprises 157 residues: Endoribonuclease YbeY (157 aa).

Zn(2+) contacts are provided by His118, His122, and His128.

It belongs to the endoribonuclease YbeY family. Requires Zn(2+) as cofactor.

Its subcellular location is the cytoplasm. Single strand-specific metallo-endoribonuclease involved in late-stage 70S ribosome quality control and in maturation of the 3' terminus of the 16S rRNA. The protein is Endoribonuclease YbeY of Bordetella bronchiseptica (strain ATCC BAA-588 / NCTC 13252 / RB50) (Alcaligenes bronchisepticus).